A 404-amino-acid polypeptide reads, in one-letter code: Riboflavin biosynthesis protein RibBA (404 aa).

Positions 1–204 (MEELKLNTIE…IRDLIAYRLK (204 aa)) are DHBP synthase. D-ribulose 5-phosphate is bound by residues 30 to 31 (RE), D35, 143 to 147 (RAGHT), and E167. E31 is a Mg(2+) binding site. H146 provides a ligand contact to Mg(2+). The interval 205 to 404 (QESLVEKGVE…RMGHTLHFNK (200 aa)) is GTP cyclohydrolase II. 255-259 (RVHSS) serves as a coordination point for GTP. Residues C260, C271, and C273 each contribute to the Zn(2+) site. GTP contacts are provided by residues Q276, 298-300 (EGR), and T320. D332 (proton acceptor; for GTP cyclohydrolase activity) is an active-site residue. R334 functions as the Nucleophile; for GTP cyclohydrolase activity in the catalytic mechanism. GTP contacts are provided by T355 and K360.

The protein in the N-terminal section; belongs to the DHBP synthase family. In the C-terminal section; belongs to the GTP cyclohydrolase II family. The cofactor is Mg(2+). It depends on Mn(2+) as a cofactor. Zn(2+) is required as a cofactor.

It catalyses the reaction D-ribulose 5-phosphate = (2S)-2-hydroxy-3-oxobutyl phosphate + formate + H(+). The enzyme catalyses GTP + 4 H2O = 2,5-diamino-6-hydroxy-4-(5-phosphoribosylamino)-pyrimidine + formate + 2 phosphate + 3 H(+). It participates in cofactor biosynthesis; riboflavin biosynthesis; 2-hydroxy-3-oxobutyl phosphate from D-ribulose 5-phosphate: step 1/1. Its pathway is cofactor biosynthesis; riboflavin biosynthesis; 5-amino-6-(D-ribitylamino)uracil from GTP: step 1/4. Catalyzes the conversion of D-ribulose 5-phosphate to formate and 3,4-dihydroxy-2-butanone 4-phosphate. Its function is as follows. Catalyzes the conversion of GTP to 2,5-diamino-6-ribosylamino-4(3H)-pyrimidinone 5'-phosphate (DARP), formate and pyrophosphate. The protein is Riboflavin biosynthesis protein RibBA of Phocaeicola vulgatus (strain ATCC 8482 / DSM 1447 / JCM 5826 / CCUG 4940 / NBRC 14291 / NCTC 11154) (Bacteroides vulgatus).